We begin with the raw amino-acid sequence, 202 residues long: MPKPTKGPRLGGSPSHQRLILSNLATQLFEHGRITTTESRARALRPHAEKLITKAKKGDLHNRREVLKTIRDKSVVHTLFTEIAPTFAERPGGYTRITKIGPRKGDNAPMAVIELVTEAYKPSAPKAKKAAPAATAPAPVEEAPAEETVAEETAVEEAPTELTDEASPEESVVTEEQPVEDEAATEEPAAESTEESTEDDKA.

A compositionally biased stretch (low complexity) spans 130 to 142; the sequence is AAPAATAPAPVEE. Residues 130 to 202 form a disordered region; sequence AAPAATAPAP…TEESTEDDKA (73 aa). Acidic residues-rich tracts occupy residues 143–168 and 177–202; these read APAEETVAEETAVEEAPTELTDEASP and QPVEDEAATEEPAAESTEESTEDDKA.

Belongs to the bacterial ribosomal protein bL17 family. Part of the 50S ribosomal subunit. Contacts protein L32.

The protein is Large ribosomal subunit protein bL17 of Nocardioides sp. (strain ATCC BAA-499 / JS614).